A 289-amino-acid chain; its full sequence is BTB/POZ domain-containing protein KCTD7 (289 aa).

The interval 1 to 42 (MVVVNGREPDSRHSDGAMSSSEAEDDFLEPATPTATQAGHGL) is disordered. A BTB domain is found at 53–141 (VPLNIGGAHF…YAIGPLLEQL (89 aa)).

In terms of assembly, interacts with CUL3.

The protein resides in the cell membrane. The protein localises to the cytoplasm. Its subcellular location is the cytosol. In terms of biological role, may be involved in the control of excitability of cortical neurons. The chain is BTB/POZ domain-containing protein KCTD7 (Kctd7) from Rattus norvegicus (Rat).